Reading from the N-terminus, the 269-residue chain is Small ribosomal subunit protein uS3 (269 aa).

The KH type-2 domain occupies 38–106 (IREWLHKNLE…QIQLNILEVK (69 aa)). Residues 215 to 269 (AQKAARQAAQGGRGGRGGNRRGRGDRPDRRGGRRRAEAAKQSAETPAPQTENAGA) are disordered. The span at 236–252 (GRGDRPDRRGGRRRAEA) shows a compositional bias: basic and acidic residues. The span at 256–269 (SAETPAPQTENAGA) shows a compositional bias: polar residues.

It belongs to the universal ribosomal protein uS3 family. As to quaternary structure, part of the 30S ribosomal subunit. Forms a tight complex with proteins S10 and S14.

In terms of biological role, binds the lower part of the 30S subunit head. Binds mRNA in the 70S ribosome, positioning it for translation. The polypeptide is Small ribosomal subunit protein uS3 (Cutibacterium acnes (strain DSM 16379 / KPA171202) (Propionibacterium acnes)).